Here is a 1374-residue protein sequence, read N- to C-terminus: L-2-aminoadipate reductase large subunit (1374 aa).

The Carrier domain occupies 828–905; that stretch reads SEFNQQEREI…AFAAEVSRLK (78 aa). Serine 865 carries the O-(pantetheine 4'-phosphoryl)serine modification.

The protein belongs to the ATP-dependent AMP-binding enzyme family. Heterodimer of an alpha and a beta subunit. Requires pantetheine 4'-phosphate as cofactor.

It catalyses the reaction (S)-2-amino-6-oxohexanoate + NADP(+) + H2O = L-2-aminoadipate + NADPH + 2 H(+). It carries out the reaction (S)-2-amino-6-oxohexanoate + NAD(+) + H2O = L-2-aminoadipate + NADH + 2 H(+). The enzyme catalyses (S)-2-amino-6-oxohexanoate + AMP + diphosphate + NADP(+) = L-2-aminoadipate + ATP + NADPH + H(+). The protein operates within amino-acid biosynthesis; L-lysine biosynthesis via AAA pathway; L-lysine from L-alpha-aminoadipate (fungal route): step 1/3. Catalyzes the activation of alpha-aminoadipate by ATP-dependent adenylation and the reduction of activated alpha-aminoadipate by NADPH. The activated alpha-aminoadipate is bound to the phosphopantheinyl group of the enzyme itself before it is reduced to (S)-2-amino-6-oxohexanoate. In Candida glabrata (strain ATCC 2001 / BCRC 20586 / JCM 3761 / NBRC 0622 / NRRL Y-65 / CBS 138) (Yeast), this protein is L-2-aminoadipate reductase large subunit (LYS2).